A 196-amino-acid chain; its full sequence is ATP-dependent Clp protease proteolytic subunit (196 aa).

S101 serves as the catalytic Nucleophile. The active site involves H126.

This sequence belongs to the peptidase S14 family. Component of the chloroplastic Clp protease core complex.

It localises to the plastid. Its subcellular location is the chloroplast stroma. The enzyme catalyses Hydrolysis of proteins to small peptides in the presence of ATP and magnesium. alpha-casein is the usual test substrate. In the absence of ATP, only oligopeptides shorter than five residues are hydrolyzed (such as succinyl-Leu-Tyr-|-NHMec, and Leu-Tyr-Leu-|-Tyr-Trp, in which cleavage of the -Tyr-|-Leu- and -Tyr-|-Trp bonds also occurs).. Its function is as follows. Cleaves peptides in various proteins in a process that requires ATP hydrolysis. Has a chymotrypsin-like activity. Plays a major role in the degradation of misfolded proteins. The chain is ATP-dependent Clp protease proteolytic subunit from Barbarea verna (Land cress).